The sequence spans 280 residues: Phosphatidylglycerol--prolipoprotein diacylglyceryl transferase (280 aa).

The next 3 helical transmembrane spans lie at 15-35, 60-80, and 90-110; these read IFSI…IFAL, FIGL…PVFF, and IWEG…VLLF. An a 1,2-diacyl-sn-glycero-3-phospho-(1'-sn-glycerol)-binding site is contributed by R138. 2 helical membrane passes run 217–237 and 257–277; these read MPFG…RIFL and GQLL…NIYV.

It belongs to the Lgt family.

The protein localises to the cell membrane. The catalysed reaction is L-cysteinyl-[prolipoprotein] + a 1,2-diacyl-sn-glycero-3-phospho-(1'-sn-glycerol) = an S-1,2-diacyl-sn-glyceryl-L-cysteinyl-[prolipoprotein] + sn-glycerol 1-phosphate + H(+). It participates in protein modification; lipoprotein biosynthesis (diacylglyceryl transfer). Catalyzes the transfer of the diacylglyceryl group from phosphatidylglycerol to the sulfhydryl group of the N-terminal cysteine of a prolipoprotein, the first step in the formation of mature lipoproteins. The polypeptide is Phosphatidylglycerol--prolipoprotein diacylglyceryl transferase (Buchnera aphidicola subsp. Baizongia pistaciae (strain Bp)).